We begin with the raw amino-acid sequence, 364 residues long: MKKLKKFVTKPHIFFRDALNNKYPIINNEQGIKELDERAVLSHQENLEKLESSLMNTPIPIDVVFTWVNDKDEKWQEKKQHYSKLANNYAFYAKDNVRFEEHNELFYSVKSVQKFLPWVRYIFIVTDNQIPHWLNNEDSQIKIVDHREIIDHDYLPTFNSHVIEANLHKIPNLSEHFIYFNDDVFVAKPLKKSHFFKPNGLASIFLSIKNLDKMYAKGTTTPTLLASMNSRRLLRKMYGQELNIQTPLIHSYIPLKKSVFEKIWSVFKEEIESFLSNRFRGKNDLNLATFFVPYAMYLEGKSVLTPEICYYFNIRSANAKAQYKKLLQKKENGNRPHSFCINDTSSSNNHFYHKNFNTFINLYF.

The protein belongs to the stealth family.

Part of a group II capsule biosynthesis locus. The protein is Capsular polysaccharide phosphotransferase fcs1 (fcs1) of Haemophilus influenzae.